Consider the following 268-residue polypeptide: Non-homologous end joining protein Ku (268 aa).

The region spanning 13 to 175 is the Ku domain; the sequence is VSLVTCPVTM…TLHDGNAVRN (163 aa). A disordered region spans residues 174 to 194; sequence RNGGHPAARTRPASEAESADS.

It belongs to the prokaryotic Ku family. In terms of assembly, homodimer. Interacts with LigD.

In terms of biological role, with LigD forms a non-homologous end joining (NHEJ) DNA repair enzyme, which repairs dsDNA breaks with reduced fidelity. Binds linear dsDNA with 5'- and 3'- overhangs but not closed circular dsDNA nor ssDNA. Recruits and stimulates the ligase activity of LigD. In Gluconacetobacter diazotrophicus (strain ATCC 49037 / DSM 5601 / CCUG 37298 / CIP 103539 / LMG 7603 / PAl5), this protein is Non-homologous end joining protein Ku.